A 522-amino-acid polypeptide reads, in one-letter code: Zinc finger protein 892 (522 aa).

2 disordered regions span residues 1–22 (MEPEGRGSLFEDSDLLHAGNPK) and 96–124 (AASQKHWETIPESKELTPEKDISEEESAP). Residues 100–116 (KHWETIPESKELTPEKD) show a composition bias toward basic and acidic residues. C2H2-type zinc fingers lie at residues 221-243 (WKCNECEKAFSYYSAFVLHQRIH), 249-271 (YECNECGKAFSQSIHLTLHQRIH), 277-299 (YECHECGKAFSHRSALIRHHIIH), 305-327 (YECNECGKAFNQSSYLTQHQRIH), 333-355 (YECNECGKAFSQSTFLTQHQVIH), 361-383 (YKCNECGKAFSDRSGLIQHQRTH), 389-411 (YECNECGKAFGYCSALTQHQRTH), 417-439 (YKCNDCAKAFSDRSALIRHQRTH), 445-467 (YKCKDCGKAFSQSSSLTKHQKTH), and 473-495 (YKCKECGKAFSQSSSLSQHQKTH).

It belongs to the krueppel C2H2-type zinc-finger protein family.

It is found in the nucleus. May be involved in transcriptional regulation. This Homo sapiens (Human) protein is Zinc finger protein 892.